Here is a 468-residue protein sequence, read N- to C-terminus: Putative magnesium transporter MRS2-G (468 aa).

Disordered stretches follow at residues 1 to 76 (MGRR…AGKV) and 183 to 204 (GQPG…QVPR). Low complexity-rich tracts occupy residues 14-23 (ASNASTSSST) and 31-45 (RLPS…SSPS). Pro residues predominate over residues 46–67 (PASPSPPPPSASHPAPPSPPLA). Residues 187-201 (GDDHGEKHDDSHGDQ) are compositionally biased toward basic and acidic residues. 2 consecutive transmembrane segments (helical) span residues 402–422 (LTLT…GAFA) and 437–457 (FFWP…IVLL).

It belongs to the CorA metal ion transporter (MIT) (TC 1.A.35.5) family. In terms of assembly, interacts with CYCB2-2.

Its subcellular location is the membrane. Putative magnesium transporter. The protein is Putative magnesium transporter MRS2-G (MRS2-G) of Oryza sativa subsp. japonica (Rice).